The chain runs to 633 residues: Biosynthetic arginine decarboxylase (633 aa).

K101 is subject to N6-(pyridoxal phosphate)lysine. Residue V284–Y294 coordinates substrate.

This sequence belongs to the Orn/Lys/Arg decarboxylase class-II family. SpeA subfamily. It depends on Mg(2+) as a cofactor. Pyridoxal 5'-phosphate serves as cofactor.

It carries out the reaction L-arginine + H(+) = agmatine + CO2. The protein operates within amine and polyamine biosynthesis; agmatine biosynthesis; agmatine from L-arginine: step 1/1. Functionally, catalyzes the biosynthesis of agmatine from arginine. In Aeromonas salmonicida (strain A449), this protein is Biosynthetic arginine decarboxylase.